Here is a 337-residue protein sequence, read N- to C-terminus: Ketol-acid reductoisomerase (NADP(+)) (337 aa).

A KARI N-terminal Rossmann domain is found at 3-183; sequence VEMFYDADAD…GGARAGVIKT (181 aa). NADP(+) contacts are provided by residues 26-29, lysine 49, serine 52, serine 54, and 84-87; these read YGSQ and DTAQ. Histidine 109 is an active-site residue. Glycine 135 contributes to the NADP(+) binding site. The 146-residue stretch at 184–329 folds into the KARI C-terminal knotted domain; it reads TFKDETETDL…KKLRDLMSWV (146 aa). Mg(2+) contacts are provided by aspartate 192, glutamate 196, glutamate 228, and glutamate 232. Serine 253 serves as a coordination point for substrate.

It belongs to the ketol-acid reductoisomerase family. Mg(2+) serves as cofactor.

It carries out the reaction (2R)-2,3-dihydroxy-3-methylbutanoate + NADP(+) = (2S)-2-acetolactate + NADPH + H(+). It catalyses the reaction (2R,3R)-2,3-dihydroxy-3-methylpentanoate + NADP(+) = (S)-2-ethyl-2-hydroxy-3-oxobutanoate + NADPH + H(+). Its pathway is amino-acid biosynthesis; L-isoleucine biosynthesis; L-isoleucine from 2-oxobutanoate: step 2/4. It participates in amino-acid biosynthesis; L-valine biosynthesis; L-valine from pyruvate: step 2/4. Functionally, involved in the biosynthesis of branched-chain amino acids (BCAA). Catalyzes an alkyl-migration followed by a ketol-acid reduction of (S)-2-acetolactate (S2AL) to yield (R)-2,3-dihydroxy-isovalerate. In the isomerase reaction, S2AL is rearranged via a Mg-dependent methyl migration to produce 3-hydroxy-3-methyl-2-ketobutyrate (HMKB). In the reductase reaction, this 2-ketoacid undergoes a metal-dependent reduction by NADPH to yield (R)-2,3-dihydroxy-isovalerate. This Mycolicibacterium gilvum (strain PYR-GCK) (Mycobacterium gilvum (strain PYR-GCK)) protein is Ketol-acid reductoisomerase (NADP(+)).